A 197-amino-acid chain; its full sequence is UPF0725 protein At5g41640 (197 aa).

Belongs to the UPF0725 (EMB2204) family.

The protein is UPF0725 protein At5g41640 of Arabidopsis thaliana (Mouse-ear cress).